Consider the following 603-residue polypeptide: Elongation factor 4 (603 aa).

In terms of domain architecture, tr-type G spans 7-189 (SRIRNFSIIA…AIVQQVPPPA (183 aa)). Residues 19–24 (DHGKST) and 136–139 (NKID) contribute to the GTP site.

This sequence belongs to the TRAFAC class translation factor GTPase superfamily. Classic translation factor GTPase family. LepA subfamily.

The protein resides in the cell inner membrane. The catalysed reaction is GTP + H2O = GDP + phosphate + H(+). Its function is as follows. Required for accurate and efficient protein synthesis under certain stress conditions. May act as a fidelity factor of the translation reaction, by catalyzing a one-codon backward translocation of tRNAs on improperly translocated ribosomes. Back-translocation proceeds from a post-translocation (POST) complex to a pre-translocation (PRE) complex, thus giving elongation factor G a second chance to translocate the tRNAs correctly. Binds to ribosomes in a GTP-dependent manner. In Synechocystis sp. (strain ATCC 27184 / PCC 6803 / Kazusa), this protein is Elongation factor 4.